Reading from the N-terminus, the 78-residue chain is Small ribosomal subunit protein uS17 (78 aa).

This sequence belongs to the universal ribosomal protein uS17 family. In terms of assembly, part of the 30S ribosomal subunit.

Its function is as follows. One of the primary rRNA binding proteins, it binds specifically to the 5'-end of 16S ribosomal RNA. The polypeptide is Small ribosomal subunit protein uS17 (Pelagibacter ubique (strain HTCC1062)).